A 270-amino-acid chain; its full sequence is Pancreas transcription factor 1 subunit alpha (270 aa).

In terms of domain architecture, bHLH spans 119–171; that stretch reads QLRQAANVRERRRMQSINDAFEGLRSHIPTLPYEKRLSKVDTLRLAIGYINFL.

Its subcellular location is the nucleus. In terms of biological role, transcription factor implicated in the cell fate determination in various organs. Binds to the E-box consensus sequence 5'-CANNTG-3'. Acts together with pdx1 to induce the pancreatic lineage within the endoderm. Plays a central role in directing the differentiation of retinal progenitors towards horizontal and amacrine fates. The sequence is that of Pancreas transcription factor 1 subunit alpha (ptf1a) from Xenopus laevis (African clawed frog).